Consider the following 487-residue polypeptide: Lysophospholipid acyltransferase 5 (487 aa).

The residue at position 2 (alanine 2) is an N-acetylalanine. Transmembrane regions (helical) follow at residues 44–64 (LIIS…YLFY), 84–104 (FNFG…FLIL), 111–131 (ITAV…GYYY), 180–200 (GVPS…FLVG), 227–247 (IIPA…YTLL), and 285–305 (VTCW…FNGF). Active-site residues include asparagine 338 and histidine 374. 3 consecutive transmembrane segments (helical) span residues 364 to 384 (GLSL…LVCF), 422 to 442 (LVQQ…FCLF), and 453 to 473 (SIYF…PYIH). The short motif at 484 to 487 (KKME) is the Di-lysine motif element.

This sequence belongs to the membrane-bound acyltransferase family. In terms of tissue distribution, highly expressed in liver, pancreas and adipose tissue. Very low expression in skeletal muscle and heart. Detected in neutrophils.

It is found in the endoplasmic reticulum membrane. It catalyses the reaction a 1-acyl-sn-glycero-3-phosphocholine + an acyl-CoA = a 1,2-diacyl-sn-glycero-3-phosphocholine + CoA. The enzyme catalyses a 1-acyl-sn-glycero-3-phosphoethanolamine + an acyl-CoA = a 1,2-diacyl-sn-glycero-3-phosphoethanolamine + CoA. The catalysed reaction is a 1-acyl-sn-glycero-3-phospho-L-serine + an acyl-CoA = a 1,2-diacyl-sn-glycero-3-phospho-L-serine + CoA. It carries out the reaction (9Z,12Z)-octadecadienoyl-CoA + a 1-acyl-sn-glycero-3-phosphocholine = 1-acyl-2-(9Z,12Z)-octadecadienoyl-sn-glycero-3-phosphocholine + CoA. It catalyses the reaction (5Z,8Z,11Z,14Z)-eicosatetraenoyl-CoA + a 1-acyl-sn-glycero-3-phosphocholine = 1-acyl-2-(5Z,8Z,11Z,14Z-eicosatetraenoyl)-sn-glycero-3-phosphocholine + CoA. The enzyme catalyses dodecanoyl-CoA + 1-hexadecanoyl-sn-glycero-3-phosphocholine = 1-hexadecanoyl-2-dodecanoyl-sn-glycero-3-phosphocholine + CoA. The catalysed reaction is octadecanoyl-CoA + 1-hexadecanoyl-sn-glycero-3-phosphocholine = 1-hexadecanoyl-2-octadecanoyl-sn-glycero-3-phosphocholine + CoA. It carries out the reaction 1-dodecanoyl-sn-glycero-3-phosphocholine + hexadecanoyl-CoA = 1-dodecanoyl-2-hexadecanoyl-sn-glycero-3-phosphocholine + CoA. It catalyses the reaction 1-tetradecanoyl-sn-glycero-3-phosphocholine + hexadecanoyl-CoA = 1-tetradecanoyl-2-hexadecanoyl-sn-glycero-3-phosphocholine + CoA. The enzyme catalyses 1-hexadecanoyl-sn-glycero-3-phosphocholine + hexadecanoyl-CoA = 1,2-dihexadecanoyl-sn-glycero-3-phosphocholine + CoA. The catalysed reaction is 1-octadecanoyl-sn-glycero-3-phosphocholine + hexadecanoyl-CoA = 1-octadecanoyl-2-hexadecanoyl-sn-glycero-3-phosphocholine + CoA. It carries out the reaction 1-(9Z-octadecenoyl)-sn-glycero-3-phosphocholine + hexadecanoyl-CoA = 1-(9Z-octadecenoyl)-2-hexadecanoyl-sn-glycero-3-phosphocholine + CoA. It catalyses the reaction (9Z)-hexadecenoyl-CoA + 1-hexadecanoyl-sn-glycero-3-phosphocholine = 1-hexadecanoyl-2-(9Z-hexadecenoyl)-sn-glycero-3-phosphocholine + CoA. The enzyme catalyses 1-hexadecanoyl-sn-glycero-3-phosphocholine + (9Z)-octadecenoyl-CoA = 1-hexadecanoyl-2-(9Z-octadecenoyl)-sn-glycero-3-phosphocholine + CoA. The catalysed reaction is (9Z,12Z)-octadecadienoyl-CoA + 1-hexadecanoyl-sn-glycero-3-phosphocholine = 1-hexadecanoyl-2-(9Z,12Z-octadecadienoyl)-sn-glycero-3-phosphocholine + CoA. It carries out the reaction 1-dodecanoyl-sn-glycero-3-phosphocholine + (5Z,8Z,11Z,14Z)-eicosatetraenoyl-CoA = 1-dodecanoyl-2-(5Z,8Z,11Z,14Z)-eicosatetraenoyl-sn-glycero-3-phosphocholine + CoA. It catalyses the reaction (5Z,8Z,11Z,14Z)-eicosatetraenoyl-CoA + 1-hexadecanoyl-sn-glycero-3-phosphocholine = 1-hexadecanoyl-2-(5Z,8Z,11Z,14Z-eicosatetraenoyl)-sn-glycero-3-phosphocholine + CoA. The enzyme catalyses 1-octadecanoyl-sn-glycero-3-phosphocholine + (5Z,8Z,11Z,14Z)-eicosatetraenoyl-CoA = 1-octadecanoyl-2-(5Z,8Z,11Z,14Z-eicosatetraenoyl)-sn-glycero-3-phosphocholine + CoA. The catalysed reaction is 1-eicosanoyl-sn-glycero-3-phosphocholine + (5Z,8Z,11Z,14Z)-eicosatetraenoyl-CoA = 1-eicosanoyl-2-(5Z,8Z,11Z,14Z)-eicosatetraenoyl-sn-glycero-3-phosphocholine + CoA. It carries out the reaction 1-(9Z-octadecenoyl)-sn-glycero-3-phosphocholine + (9Z)-octadecenoyl-CoA = 1,2-di-(9Z-octadecenoyl)-sn-glycero-3-phosphocholine + CoA. It catalyses the reaction 1-(9Z-octadecenoyl)-sn-glycero-3-phosphocholine + (9Z,12Z)-octadecadienoyl-CoA = 1-(9Z)-octadecenoyl-2-(9Z,12Z)-octadecadienoyl-sn-glycero-3-phosphocholine + CoA. The enzyme catalyses 1-(9Z-octadecenoyl)-sn-glycero-3-phosphocholine + (5Z,8Z,11Z,14Z)-eicosatetraenoyl-CoA = 1-(9Z)-octadecenoyl-2-(5Z,8Z,11Z,14Z)-icosatetraenoyl-sn-glycero-3-phosphocholine + CoA. The catalysed reaction is a 1-acyl-sn-glycero-3-phosphoethanolamine + (9Z,12Z)-octadecadienoyl-CoA = 1-acyl-2-(9Z,12Z)-octadecadienoyl-sn-glycero-3-phosphoethanolamine + CoA. It carries out the reaction 1-(9Z-octadecenoyl)-sn-glycero-3-phosphoethanolamine + (9Z,12Z)-octadecadienoyl-CoA = 1-(9Z)-octadecenoyl-2-(9Z,12Z)-octadecadienoyl-sn-glycero-3-phosphoethanolamine + CoA. It catalyses the reaction 1-(10Z-heptadecenoyl)-sn-glycero-3-phosphoethanolamine + (9Z,12Z)-octadecadienoyl-CoA = 1-(10Z-heptadecenoyl)-2-(9Z,12Z-octadecadienoyl)-sn-glycero-3-phosphoethanolamine + CoA. The enzyme catalyses a 1-acyl-sn-glycero-3-phosphoethanolamine + (5Z,8Z,11Z,14Z)-eicosatetraenoyl-CoA = 1-acyl-2-(5Z,8Z,11Z,14Z)-eicosatetraenoyl-sn-glycero-3-phosphoethanolamine + CoA. The catalysed reaction is 1-hexadecanoyl-sn-glycero-3-phosphoethanolamine + (5Z,8Z,11Z,14Z)-eicosatetraenoyl-CoA = 1-hexadecanoyl-2-(5Z,8Z,11Z,14Z-eicosatetraenoyl)-sn-glycero-3-phosphoethanolamine + CoA. It carries out the reaction 1-(9Z-octadecenoyl)-sn-glycero-3-phosphoethanolamine + (5Z,8Z,11Z,14Z)-eicosatetraenoyl-CoA = 1-(9Z)-octadecenoyl-2-(5Z,8Z,11Z,14Z)-eicosatetraenoyl-sn-glycero-3-phosphoethanolamine + CoA. It catalyses the reaction 1-(10Z-heptadecenoyl)-sn-glycero-3-phosphoethanolamine + (5Z,8Z,11Z,14Z)-eicosatetraenoyl-CoA = 1-(10Z-heptadecenoyl)-2-(5Z,8Z,11Z,14Z-eicosatetraenoyl)-sn-glycero-3-phosphoethanolamine + CoA. The enzyme catalyses a 1-O-(1Z-alkenyl)-sn-glycero-3-phosphoethanolamine + (5Z,8Z,11Z,14Z)-eicosatetraenoyl-CoA = 1-O-(1Z)-alkenyl-2-(5Z,8Z,11Z,14Z)-eicosatetraenoyl-sn-glycero-3-phosphoethanolamine + CoA. The catalysed reaction is a 1-acyl-sn-glycero-3-phospho-L-serine + (9Z,12Z)-octadecadienoyl-CoA = 1-acyl-2-(9Z,12Z-octadecadienoyl)-sn-glycero-3-phospho-L-serine + CoA. It carries out the reaction a 1-acyl-sn-glycero-3-phospho-L-serine + (5Z,8Z,11Z,14Z)-eicosatetraenoyl-CoA = 1-acyl-2-(5Z,8Z,11Z,14Z-eicosatetraenoyl)-sn-glycero-3-phospho-L-serine + CoA. It catalyses the reaction 1-hexadecanoyl-sn-glycero-3-phospho-L-serine + (9Z)-octadecenoyl-CoA = 1-hexadecanoyl-2-(9Z-octadecenoyl)-sn-glycero-3-phospho-L-serine + CoA. The enzyme catalyses 1-(9Z-octadecenoyl)-sn-glycero-3-phospho-L-serine + (9Z)-octadecenoyl-CoA = 1,2-di-(9Z)-octadecenoyl-sn-glycero-3-phospho-L-serine + CoA. The catalysed reaction is 1-hexadecanoyl-sn-glycero-3-phospho-L-serine + (9Z,12Z)-octadecadienoyl-CoA = 1-hexadecanoyl-2-(9Z,12Z-octadecadienoyl)-sn-glycero-3-phospho-L-serine + CoA. It carries out the reaction 1-(9Z-octadecenoyl)-sn-glycero-3-phospho-L-serine + (9Z,12Z)-octadecadienoyl-CoA = 1-(9Z-octadecenoyl)-2-(9Z,12Z-octadienoyl)-sn-glycero-3-phospho-L-serine + CoA. It catalyses the reaction 1-hexadecanoyl-sn-glycero-3-phospho-L-serine + (5Z,8Z,11Z,14Z)-eicosatetraenoyl-CoA = 1-hexadecanoyl-2-(5Z,8Z,11Z,14Z-eicosatetraenoyl)-sn-glycero-3-phospho-L-serine + CoA. The enzyme catalyses 1-(9Z-octadecenoyl)-sn-glycero-3-phospho-L-serine + (5Z,8Z,11Z,14Z)-eicosatetraenoyl-CoA = 1-(9Z-octadecenoyl)-2-(5Z,8Z,11Z,14Z-eicosatetraenoyl)-sn-glycero-3-phospho-L-serine + CoA. The protein operates within lipid metabolism; phospholipid metabolism. Activity is inhibited by thimerosal. Its function is as follows. Lysophospholipid O-acyltransferase (LPLAT) that catalyzes the reacylation step of the phospholipid remodeling process also known as the Lands cycle. Catalyzes transfer of the fatty acyl chain from fatty acyl-CoA to 1-acyl lysophospholipid to form various classes of phospholipids. Converts 1-acyl lysophosphatidylcholine (LPC) into phosphatidylcholine (PC) (LPCAT activity), 1-acyl lysophosphatidylserine (LPS) into phosphatidylserine (PS) (LPSAT activity) and 1-acyl lysophosphatidylethanolamine (LPE) into phosphatidylethanolamine (PE) (LPEAT activity). Favors polyunsaturated fatty acyl-CoAs as acyl donors compared to saturated fatty acyl-CoAs. Has higher activity for LPC acyl acceptors compared to LPEs and LPSs. Can also transfer the fatty acyl chain from fatty acyl-CoA to 1-O-alkyl lysophospholipid or 1-O-alkenyl lysophospholipid with lower efficiency. Acts as a major LPC O-acyltransferase in liver and intestine. As a component of the liver X receptor/NR1H3 or NR1H2 signaling pathway, mainly catalyzes the incorporation of arachidonate into PCs of endoplasmic reticulum (ER) membranes, increasing membrane dynamics and enabling triacylglycerols transfer to nascent very low-density lipoprotein (VLDL) particles. Promotes processing of sterol regulatory protein SREBF1 in hepatocytes, likely by facilitating the translocation of SREBF1-SCAP complex from ER to the Golgi apparatus. Participates in mechanisms by which the liver X receptor/NR1H3 or NR1H2 signaling pathway counteracts lipid-induced ER stress response and inflammation. Down-regulates hepatic inflammation by limiting arachidonic acid availability for synthesis of inflammatory eicosanoids, such as prostaglandins. In enterocytes, acts as a component of a gut-brain feedback loop that coordinates dietary lipid absorption and food intake. Regulates the abundance of PCs containing linoleate and arachidonate in enterocyte membranes, enabling passive diffusion of fatty acids and cholesterol across the membrane for efficient chylomicron assembly. In the intestinal crypt, acts as a component of dietary-responsive phospholipid-cholesterol axis, regulating the biosynthesis of cholesterol and its mitogenic effects on intestinal stem cells. The protein is Lysophospholipid acyltransferase 5 (LPCAT3) of Homo sapiens (Human).